The following is a 186-amino-acid chain: Peptide deformylase (186 aa).

Fe cation is bound by residues C113 and H156. Residue E157 is part of the active site. Residue H160 coordinates Fe cation.

This sequence belongs to the polypeptide deformylase family. Fe(2+) is required as a cofactor.

The catalysed reaction is N-terminal N-formyl-L-methionyl-[peptide] + H2O = N-terminal L-methionyl-[peptide] + formate. Functionally, removes the formyl group from the N-terminal Met of newly synthesized proteins. Requires at least a dipeptide for an efficient rate of reaction. N-terminal L-methionine is a prerequisite for activity but the enzyme has broad specificity at other positions. The chain is Peptide deformylase from Levilactobacillus brevis (strain ATCC 367 / BCRC 12310 / CIP 105137 / JCM 1170 / LMG 11437 / NCIMB 947 / NCTC 947) (Lactobacillus brevis).